The primary structure comprises 122 residues: Large ribosomal subunit protein uL18 (122 aa).

Belongs to the universal ribosomal protein uL18 family. In terms of assembly, part of the 50S ribosomal subunit; part of the 5S rRNA/L5/L18/L25 subcomplex. Contacts the 5S and 23S rRNAs.

Its function is as follows. This is one of the proteins that bind and probably mediate the attachment of the 5S RNA into the large ribosomal subunit, where it forms part of the central protuberance. This is Large ribosomal subunit protein uL18 from Kosmotoga olearia (strain ATCC BAA-1733 / DSM 21960 / TBF 19.5.1).